The sequence spans 79 residues: Translational regulator CsrA (79 aa).

This sequence belongs to the CsrA/RsmA family. As to quaternary structure, homodimer; the beta-strands of each monomer intercalate to form a hydrophobic core, while the alpha-helices form wings that extend away from the core.

Its subcellular location is the cytoplasm. In terms of biological role, a translational regulator that binds mRNA to regulate translation initiation and/or mRNA stability. Usually binds in the 5'-UTR at or near the Shine-Dalgarno sequence preventing ribosome-binding, thus repressing translation. Its main target seems to be the major flagellin gene, while its function is anatagonized by FliW. The polypeptide is Translational regulator CsrA (Syntrophus aciditrophicus (strain SB)).